The sequence spans 67 residues: Large ribosomal subunit protein uL30 (67 aa).

This sequence belongs to the universal ribosomal protein uL30 family. As to quaternary structure, part of the 50S ribosomal subunit.

This Sinorhizobium medicae (strain WSM419) (Ensifer medicae) protein is Large ribosomal subunit protein uL30.